Consider the following 619-residue polypeptide: Putative zinc transporter At3g08650 (619 aa).

The next 15 helical transmembrane spans lie at Met-25–Ile-45, Val-102–Phe-122, Trp-129–Val-149, His-155–Cys-175, Val-198–Val-218, Leu-230–Val-250, Ala-261–Leu-281, Phe-289–Val-309, Gly-354–Ala-374, His-383–Leu-403, Leu-405–Gly-425, Leu-465–Ala-485, Ala-528–Ile-548, Gly-552–Ile-572, and Val-585–Cys-605.

The protein belongs to the ZIP transporter (TC 2.A.5) family. ZupT subfamily.

It is found in the membrane. Its function is as follows. May transport zinc. This chain is Putative zinc transporter At3g08650, found in Arabidopsis thaliana (Mouse-ear cress).